Reading from the N-terminus, the 252-residue chain is Type II secretion system protein N (252 aa).

The Cytoplasmic portion of the chain corresponds to 1–4 (MKRA). Residues 5–25 (VGYGLLFSTVLMTSVVVHLPA) form a helical membrane-spanning segment. The Periplasmic portion of the chain corresponds to 26–252 (QVALSPLPLP…RYPFNQQGQL (227 aa)).

This sequence belongs to the GSP N family.

The protein localises to the cell inner membrane. Functionally, involved in a type II secretion system (T2SS, formerly general secretion pathway, GSP) for the export of proteins. Required for secretion of cholera toxin through the outer membrane. The sequence is that of Type II secretion system protein N (epsN) from Vibrio cholerae serotype O1 (strain ATCC 39315 / El Tor Inaba N16961).